A 187-amino-acid polypeptide reads, in one-letter code: MALEAWFMDDSNEDQRLPHHRNPKELVSLDYLAELGVLYWKLNPENYENDSELSKIREDRGYDYMDLLDLCPEKVSNYEEKLKNFFTEHIHKDEEIRYCLAGSGYFDVRDKDDRWIRIWMQPGDLIVLPAGIYHRFTLDASNYIKLMRLFVGEPVWTPYNRPQEEHPVRKKYIHGLTYKFGETVKAH.

Ala-2 is subject to N-acetylalanine. Residues His-89, His-91, Glu-95, and His-134 each contribute to the Fe(2+) site. Residues His-89, His-91, Glu-95, and His-134 each coordinate Ni(2+).

This sequence belongs to the acireductone dioxygenase (ARD) family. Fe(2+) is required as a cofactor. It depends on Ni(2+) as a cofactor.

The protein localises to the cytoplasm. Its subcellular location is the nucleus. It carries out the reaction 1,2-dihydroxy-5-(methylsulfanyl)pent-1-en-3-one + O2 = 4-methylsulfanyl-2-oxobutanoate + formate + 2 H(+). It catalyses the reaction 1,2-dihydroxy-5-(methylsulfanyl)pent-1-en-3-one + O2 = 3-(methylsulfanyl)propanoate + CO + formate + 2 H(+). Its pathway is amino-acid biosynthesis; L-methionine biosynthesis via salvage pathway; L-methionine from S-methyl-5-thio-alpha-D-ribose 1-phosphate: step 5/6. In terms of biological role, catalyzes 2 different reactions between oxygen and the acireductone 1,2-dihydroxy-3-keto-5-methylthiopentene (DHK-MTPene) depending upon the metal bound in the active site. Fe-containing acireductone dioxygenase (Fe-ARD) produces formate and 2-keto-4-methylthiobutyrate (KMTB), the alpha-ketoacid precursor of methionine in the methionine recycle pathway. Ni-containing acireductone dioxygenase (Ni-ARD) produces methylthiopropionate, carbon monoxide and formate, and does not lie on the methionine recycle pathway. The sequence is that of Acireductone dioxygenase 4 (ARD4) from Arabidopsis thaliana (Mouse-ear cress).